We begin with the raw amino-acid sequence, 201 residues long: Imidazoleglycerol-phosphate dehydratase (201 aa).

This sequence belongs to the imidazoleglycerol-phosphate dehydratase family.

It localises to the cytoplasm. The enzyme catalyses D-erythro-1-(imidazol-4-yl)glycerol 3-phosphate = 3-(imidazol-4-yl)-2-oxopropyl phosphate + H2O. It functions in the pathway amino-acid biosynthesis; L-histidine biosynthesis; L-histidine from 5-phospho-alpha-D-ribose 1-diphosphate: step 6/9. This chain is Imidazoleglycerol-phosphate dehydratase, found in Prochlorococcus marinus (strain AS9601).